The chain runs to 538 residues: RNA-binding protein RO60 (538 aa).

Met-1 carries the post-translational modification N-acetylmethionine. A phosphoserine mark is found at Ser-4 and Ser-19. The 354-residue stretch at 16 to 369 folds into the TROVE domain; that stretch reads IANSQDGYVW…TFKTVEPTGK (354 aa). The RNA-binding stretch occupies residues 120-284; that stretch reads RIPTHLFTFI…EMPLTALLRN (165 aa). An N6-acetyllysine mark is found at Lys-224 and Lys-359. A VWFA-like domain region spans residues 361-538; it reads FKTVEPTGKR…VIRNFTLDMI (178 aa). Positions 378, 380, and 445 each coordinate a divalent metal cation.

Belongs to the Ro 60 kDa family. In terms of assembly, identified in a IGF2BP1-dependent mRNP granule complex containing untranslated mRNAs. Found in a complex with PUF60 and Y5 RNA. Interacts with RAB11FIP5.

The protein resides in the cytoplasm. Functionally, RNA-binding protein that binds to misfolded non-coding RNAs, pre-5S rRNA, and several small cytoplasmic RNA molecules known as Y RNAs. Binds to endogenous Alu retroelements which are induced by type I interferon and stimulate porinflammatory cytokine secretion. Regulates the expression of Alu retroelements as well as inflammatory genes. May play roles in cilia formation and/or maintenance. The protein is RNA-binding protein RO60 of Homo sapiens (Human).